We begin with the raw amino-acid sequence, 554 residues long: Probable phospholipase D F09G2.8 (554 aa).

The Cytoplasmic segment spans residues Met1–Pro123. Residues Ala124–Phe144 traverse the membrane as a helical; Signal-anchor for type II membrane protein segment. Residues Asn145–Leu554 are Extracellular-facing. Asn181, Asn208, Asn244, and Asn266 each carry an N-linked (GlcNAc...) asparagine glycan. The PLD phosphodiesterase 1 domain maps to Gly272–Ser299. Residues His277, Lys279, and Asp284 contribute to the active site. Residues Asn333, Asn350, Asn468, and Asn513 are each glycosylated (N-linked (GlcNAc...) asparagine). Positions Phe492–Tyr518 constitute a PLD phosphodiesterase 2 domain.

This sequence belongs to the phospholipase D family.

Its subcellular location is the membrane. It carries out the reaction a 1,2-diacyl-sn-glycero-3-phosphocholine + H2O = a 1,2-diacyl-sn-glycero-3-phosphate + choline + H(+). The chain is Probable phospholipase D F09G2.8 from Caenorhabditis elegans.